The primary structure comprises 831 residues: Periplasmic nitrate reductase (831 aa).

Positions 1-29 form a signal peptide, tat-type signal; the sequence is MTVTRRDFVRHQALATAAAAAGVAVPAAA. A 4Fe-4S Mo/W bis-MGD-type domain is found at 41–97; the sequence is LVWSKAPCRFCGTGCSVNVATKEGRVVATHGDIKSPVNRGLNCVKGYFLSKVMYGED. Residues C48, C51, C55, and C83 each coordinate [4Fe-4S] cluster. Mo-bis(molybdopterin guanine dinucleotide)-binding positions include K85, Q152, N177, C181, 214-221, 245-249, 264-266, M375, Q379, N485, 511-512, K534, D561, and 721-730; these read WGSNMAEM, STYEH, QSD, SD, and TGRVIEHWHS. A substrate-binding site is contributed by W797. The Mo-bis(molybdopterin guanine dinucleotide) site is built by N805 and K822.

Belongs to the prokaryotic molybdopterin-containing oxidoreductase family. NasA/NapA/NarB subfamily. As to quaternary structure, component of the periplasmic nitrate reductase NapAB complex composed of NapA and NapB. [4Fe-4S] cluster serves as cofactor. The cofactor is Mo-bis(molybdopterin guanine dinucleotide). In terms of processing, predicted to be exported by the Tat system. The position of the signal peptide cleavage has not been experimentally proven.

Its subcellular location is the periplasm. It carries out the reaction 2 Fe(II)-[cytochrome] + nitrate + 2 H(+) = 2 Fe(III)-[cytochrome] + nitrite + H2O. In terms of biological role, catalytic subunit of the periplasmic nitrate reductase complex NapAB. Receives electrons from NapB and catalyzes the reduction of nitrate to nitrite. In Saccharophagus degradans (strain 2-40 / ATCC 43961 / DSM 17024), this protein is Periplasmic nitrate reductase.